Consider the following 338-residue polypeptide: Protein UL141 (338 aa).

Residues 1 to 25 (MCRRESLRTLPWLFWVLLSCPRLLE) form the signal peptide. At 37–278 (DIAEKMWAEN…DTGMSPWATR (242 aa)) the chain is on the extracellular side. N-linked (GlcNAc...) asparagine; by host glycans are attached at residues asparagine 117, asparagine 132, and asparagine 147. A helical transmembrane segment spans residues 279-299 (GIAAFLGFWSIFTVCFLCYLC). The Cytoplasmic segment spans residues 300–338 (YLQCCGHWCPTPGRGRRGGEGYRRLPTYDSYPGVKKMKR).

As to quaternary structure, interacts with human PVR. Interacts with human TNFRSF10A and TNFRSF10B. Forms a homodimer that engages two TNFRSF10B monomers.

Its subcellular location is the host endoplasmic reticulum membrane. Functionally, evasion of NK cell killing. Blocks surface expression of PVR which is a ligand for NK cell-activating receptors. Binds human PVR in the endoplasmic reticulum and prevents its maturation and transport to the cell surface. Targets also the natural killer cell activating ligand NECTIN2 for proteasome-mediated degradation. Additionally promotes intracellular retention of TNFRSF10A/TRAIL-R1 and TNFRSF10B/TRAIL-R2 and thus down-regulates their cell surface expression. The sequence is that of Protein UL141 (UL141) from Human cytomegalovirus (strain Merlin) (HHV-5).